Reading from the N-terminus, the 573-residue chain is Eukaryotic translation initiation factor 3 subunit D (573 aa).

Residues 111–162 (VFTRGGRGQRGARGTERGGRAQLSRGRGGQYGGGYDRGGRSAAGGRGGRRFG) are disordered. Gly residues predominate over residues 136-156 (GRGGQYGGGYDRGGRSAAGGR). Residues 301–315 (ALDMVTVNENAVDAP) are RNA gate. Positions 552–573 (PAGGLDEEEDNGDLGQEEDDEE) are disordered. Residues 556–573 (LDEEEDNGDLGQEEDDEE) show a composition bias toward acidic residues.

Belongs to the eIF-3 subunit D family. As to quaternary structure, component of the eukaryotic translation initiation factor 3 (eIF-3) complex.

It localises to the cytoplasm. Its function is as follows. mRNA cap-binding component of the eukaryotic translation initiation factor 3 (eIF-3) complex, which is involved in protein synthesis of a specialized repertoire of mRNAs and, together with other initiation factors, stimulates binding of mRNA and methionyl-tRNAi to the 40S ribosome. The eIF-3 complex specifically targets and initiates translation of a subset of mRNAs involved in cell proliferation. In the eIF-3 complex, eif3d specifically recognizes and binds the 7-methylguanosine cap of a subset of mRNAs. The sequence is that of Eukaryotic translation initiation factor 3 subunit D from Pyricularia oryzae (strain 70-15 / ATCC MYA-4617 / FGSC 8958) (Rice blast fungus).